A 335-amino-acid chain; its full sequence is tRNA N6-adenosine threonylcarbamoyltransferase (335 aa).

His110 and His114 together coordinate Fe cation. Substrate-binding positions include 132–136 (LVSGG), Asp165, Gly178, and Asn271. Residue Asp299 participates in Fe cation binding.

This sequence belongs to the KAE1 / TsaD family. It depends on Fe(2+) as a cofactor.

The protein localises to the cytoplasm. The catalysed reaction is L-threonylcarbamoyladenylate + adenosine(37) in tRNA = N(6)-L-threonylcarbamoyladenosine(37) in tRNA + AMP + H(+). Its function is as follows. Required for the formation of a threonylcarbamoyl group on adenosine at position 37 (t(6)A37) in tRNAs that read codons beginning with adenine. Is involved in the transfer of the threonylcarbamoyl moiety of threonylcarbamoyl-AMP (TC-AMP) to the N6 group of A37, together with TsaE and TsaB. TsaD likely plays a direct catalytic role in this reaction. The protein is tRNA N6-adenosine threonylcarbamoyltransferase of Campylobacter jejuni subsp. jejuni serotype O:6 (strain 81116 / NCTC 11828).